We begin with the raw amino-acid sequence, 349 residues long: Glycosyltransferase 8 domain-containing protein 2 (349 aa).

The Cytoplasmic segment spans residues Met-1–Lys-6. A helical; Signal-anchor for type II membrane protein membrane pass occupies residues Val-7–Tyr-24. Over Lys-25–Arg-349 the chain is Lumenal. The N-linked (GlcNAc...) asparagine glycan is linked to Asn-234.

It belongs to the glycosyltransferase 8 family.

Its subcellular location is the membrane. This chain is Glycosyltransferase 8 domain-containing protein 2 (Glt8d2), found in Mus musculus (Mouse).